A 314-amino-acid chain; its full sequence is 2,3,4,5-tetrahydropyridine-2,6-dicarboxylate N-succinyltransferase (314 aa).

Mg(2+) is bound by residues D163 and E180. E196 functions as the Acyl-anhydride intermediate in the catalytic mechanism. Residues R198, G213, S216, A239, 254–255, G262, K274, and 287–290 contribute to the succinyl-CoA site; these read EA and RRNS.

The protein belongs to the type 2 tetrahydrodipicolinate N-succinyltransferase family. Homotrimer.

The protein resides in the cytoplasm. The catalysed reaction is (S)-2,3,4,5-tetrahydrodipicolinate + succinyl-CoA + H2O = (S)-2-succinylamino-6-oxoheptanedioate + CoA. It functions in the pathway amino-acid biosynthesis; L-lysine biosynthesis via DAP pathway; LL-2,6-diaminopimelate from (S)-tetrahydrodipicolinate (succinylase route): step 1/3. Its function is as follows. Catalyzes the conversion of the cyclic tetrahydrodipicolinate (THDP) into the acyclic N-succinyl-L-2-amino-6-oxopimelate using succinyl-CoA. This Mycolicibacterium smegmatis (strain ATCC 700084 / mc(2)155) (Mycobacterium smegmatis) protein is 2,3,4,5-tetrahydropyridine-2,6-dicarboxylate N-succinyltransferase.